Consider the following 269-residue polypeptide: 4-hydroxy-tetrahydrodipicolinate reductase (269 aa).

NAD(+) contacts are provided by residues 8 to 13 and Glu34; that span reads GAGGRM. Arg35 is a binding site for NADP(+). NAD(+) contacts are provided by residues 98–100 and 122–125; these read GTT and ASNY. His155 functions as the Proton donor/acceptor in the catalytic mechanism. His156 lines the (S)-2,3,4,5-tetrahydrodipicolinate pocket. Lys159 serves as the catalytic Proton donor. 165–166 is a (S)-2,3,4,5-tetrahydrodipicolinate binding site; the sequence is GT.

The protein belongs to the DapB family.

It localises to the cytoplasm. The enzyme catalyses (S)-2,3,4,5-tetrahydrodipicolinate + NAD(+) + H2O = (2S,4S)-4-hydroxy-2,3,4,5-tetrahydrodipicolinate + NADH + H(+). It carries out the reaction (S)-2,3,4,5-tetrahydrodipicolinate + NADP(+) + H2O = (2S,4S)-4-hydroxy-2,3,4,5-tetrahydrodipicolinate + NADPH + H(+). It functions in the pathway amino-acid biosynthesis; L-lysine biosynthesis via DAP pathway; (S)-tetrahydrodipicolinate from L-aspartate: step 4/4. Functionally, catalyzes the conversion of 4-hydroxy-tetrahydrodipicolinate (HTPA) to tetrahydrodipicolinate. In Haemophilus ducreyi (strain 35000HP / ATCC 700724), this protein is 4-hydroxy-tetrahydrodipicolinate reductase.